Consider the following 389-residue polypeptide: Lipid-A-disaccharide synthase (389 aa).

It belongs to the LpxB family.

The catalysed reaction is a lipid X + a UDP-2-N,3-O-bis[(3R)-3-hydroxyacyl]-alpha-D-glucosamine = a lipid A disaccharide + UDP + H(+). It participates in bacterial outer membrane biogenesis; LPS lipid A biosynthesis. Its function is as follows. Condensation of UDP-2,3-diacylglucosamine and 2,3-diacylglucosamine-1-phosphate to form lipid A disaccharide, a precursor of lipid A, a phosphorylated glycolipid that anchors the lipopolysaccharide to the outer membrane of the cell. This chain is Lipid-A-disaccharide synthase, found in Burkholderia vietnamiensis (strain G4 / LMG 22486) (Burkholderia cepacia (strain R1808)).